A 133-amino-acid polypeptide reads, in one-letter code: Large ribosomal subunit protein uL22 (133 aa).

The protein belongs to the universal ribosomal protein uL22 family. In terms of assembly, part of the 50S ribosomal subunit.

Its function is as follows. This protein binds specifically to 23S rRNA; its binding is stimulated by other ribosomal proteins, e.g. L4, L17, and L20. It is important during the early stages of 50S assembly. It makes multiple contacts with different domains of the 23S rRNA in the assembled 50S subunit and ribosome. In terms of biological role, the globular domain of the protein is located near the polypeptide exit tunnel on the outside of the subunit, while an extended beta-hairpin is found that lines the wall of the exit tunnel in the center of the 70S ribosome. In Aquifex pyrophilus, this protein is Large ribosomal subunit protein uL22.